Reading from the N-terminus, the 580-residue chain is Protein O-linked-mannose beta-1,4-N-acetylglucosaminyltransferase 2 (580 aa).

At 1–4 (MHLS) the chain is on the cytoplasmic side. Residues 5-25 (AVFNALLVSVLAAVLWKHVRL) traverse the membrane as a helical; Signal-anchor for type II membrane protein segment. Over 26 to 580 (REHAATLEEE…PFADVLVCNT (555 aa)) the chain is Lumenal. Asn99 and Asn276 each carry an N-linked (GlcNAc...) asparagine glycan. The Fibronectin type-III domain occupies 488–580 (ARCQASVHGA…PFADVLVCNT (93 aa)).

It belongs to the glycosyltransferase 61 family.

Its subcellular location is the endoplasmic reticulum membrane. It catalyses the reaction 3-O-(alpha-D-mannosyl)-L-threonyl-[protein] + UDP-N-acetyl-alpha-D-glucosamine = 3-O-(N-acetyl-beta-D-glucosaminyl-(1-&gt;4)-alpha-D-mannosyl)-L-threonyl-[protein] + UDP + H(+). It participates in protein modification; protein glycosylation. In terms of biological role, O-linked mannose beta-1,4-N-acetylglucosaminyltransferase that transfers UDP-N-acetyl-D-glucosamine to the 4-position of the mannose to generate N-acetyl-D-glucosamine-beta-1,4-O-D-mannosylprotein. Involved in the biosynthesis of the phosphorylated O-mannosyl trisaccharide (N-acetylgalactosamine-beta-3-N-acetylglucosamine-beta-4-(phosphate-6-)mannose), a carbohydrate structure present in alpha-dystroglycan (DAG1), which is required for binding laminin G-like domain-containing extracellular proteins with high affinity. The sequence is that of Protein O-linked-mannose beta-1,4-N-acetylglucosaminyltransferase 2 (POMGNT2) from Pan troglodytes (Chimpanzee).